We begin with the raw amino-acid sequence, 328 residues long: MKQPVRVAVTGAAGQIGYSLLFRIASGEMLGKDQPVILQLLEVPVEKAQQALKGVMMELDDCAFPLLAGMIGTDDPKVAFKDADYALLVGSRPRGPGMERADLLKVNGEIFIGQGQALNEVASRDVKVLVVGNPANTNAYIAMKSAPDLPAKNFTAMLRLDHNRALTQVAQKAGVVVADIEKLTVWGNHSPTMYADYRFATANGESLKDKINDPAWNKDVFLPTVGKRGAAIIEARGLSSAASAANAAIDHMRDWALGTNGKWVTMGVPSDGSYGIPEGVMFGFPVTTENGEYKIVQGLEIDEFSRERINFTLNELEEERAAIADMVK.

NAD(+) is bound at residue 11 to 17 (GAAGQIG). Residues arginine 94 and arginine 100 each contribute to the substrate site. NAD(+) is bound by residues asparagine 107, glutamine 114, and 131–133 (VGN). 2 residues coordinate substrate: asparagine 133 and arginine 164. Histidine 189 functions as the Proton acceptor in the catalytic mechanism.

It belongs to the LDH/MDH superfamily. MDH type 2 family.

It carries out the reaction (S)-malate + NAD(+) = oxaloacetate + NADH + H(+). Its function is as follows. Catalyzes the reversible oxidation of malate to oxaloacetate. In Acinetobacter baumannii (strain SDF), this protein is Malate dehydrogenase.